The primary structure comprises 163 residues: Large ribosomal subunit protein uL10 (163 aa).

This sequence belongs to the universal ribosomal protein uL10 family. As to quaternary structure, part of the ribosomal stalk of the 50S ribosomal subunit. The N-terminus interacts with L11 and the large rRNA to form the base of the stalk. The C-terminus forms an elongated spine to which L12 dimers bind in a sequential fashion forming a multimeric L10(L12)X complex.

Its function is as follows. Forms part of the ribosomal stalk, playing a central role in the interaction of the ribosome with GTP-bound translation factors. The protein is Large ribosomal subunit protein uL10 (rplJ) of Haemophilus influenzae (strain ATCC 51907 / DSM 11121 / KW20 / Rd).